The following is a 3902-amino-acid chain: Hybrid PKS-NRPS synthetase pynA (3902 aa).

The interval 1 to 25 (MDTPLSSSEISPRFSNTVPSSVSSM) is disordered. The 413-residue stretch at 29 to 441 (ADPSVIVGLA…GTNAHVILDA (413 aa)) folds into the Ketosynthase family 3 (KS3) domain. Catalysis depends on for beta-ketoacyl synthase activity residues C201, H324, and H362. The malonyl-CoA:ACP transacylase (MAT) domain stretch occupies residues 555-868 (VFTGQGAQWF…PYLASLTRGV (314 aa)). Residue S647 is the For malonyltransferase activity of the active site. The segment at 945-1080 (HSILGARMPG…GLVSVETNAL (136 aa)) is N-terminal hotdog fold. A dehydratase (DH) domain region spans residues 945 to 1256 (HSILGARMPG…LEVTALGSDK (312 aa)). Residues 945–1258 (HSILGARMPG…VTALGSDKTD (314 aa)) form the PKS/mFAS DH domain. Residue H977 is the Proton acceptor; for dehydratase activity of the active site. The interval 1100–1258 (QESIPAETLY…VTALGSDKTD (159 aa)) is C-terminal hotdog fold. The active-site Proton donor; for dehydratase activity is the D1164. The tract at residues 1629 to 1945 (GLLETLVFED…MGKHTGKVVL (317 aa)) is enoyl reductase (ER) domain. Positions 1971 to 2143 (TYLLVGGLGG…AGTTMNCGMI (173 aa)) are ketoreductase (KR) domain. In terms of domain architecture, Carrier 1 spans 2251–2328 (ERTTLVLSAF…ALVTKASGLI (78 aa)). Residue S2288 is modified to O-(pantetheine 4'-phosphoryl)serine. Basic and acidic residues predominate over residues 2337–2350 (KAENVDNEGAKGNE). The interval 2337–2364 (KAENVDNEGAKGNEDQEVETQQGQLNQP) is disordered. The interval 2374-2816 (VPMSSFQQRL…AEVNLCGALE (443 aa)) is condensation (C) domain 7. The interval 2836–3248 (SVGVCQRIME…NGLLTFKGRI (413 aa)) is adenylation (A) domain 8. Positions 3391–3467 (GDDAEILQGV…AIAGMIQKQL (77 aa)) constitute a Carrier 2 domain. Position 3427 is an O-(pantetheine 4'-phosphoryl)serine (S3427). A thioesterase (TE) domain region spans residues 3515–3774 (LTGIDTFIGL…VDFLPVDALT (260 aa)).

The protein in the C-terminal section; belongs to the NRP synthetase family.

It participates in secondary metabolite biosynthesis. Its function is as follows. Hybrid PKS-NRPS synthetase; part of the gene cluster that mediates the biosynthesis of pyranonigrins, a family of antioxidative compounds. The first step of pyranonigrins biosynthesis is performed by the hybrid PKS-NRPS synthetase that condenses 6 malonyl-CoA units to an acetyl starter unit, to form a 1,3,5-trioxotetradecane-6,8-dienyl-ACP. The enoyl reductase (ER) domain of pynA is likely to be functional during the first two rounds of polyketide chain extension, to generate the saturated C-C bonds of the alkyl side chain. PynA subsequently forms the amide bond between the acyl chain and L-serine. Although pynA has a terminal reductase domain, it appears to require the thioesterase pynI for the release of the straight-chain intermediate from pynA via the formation of a tetramic acid pyranonigrin J. The methyltransferase pynC then coverts pyranonigrin J to pyranonigrin I via N-methylation. The FAD-dependent monooxygenase pynG catalyzes an epoxidation-mediated cyclization to form the dihydro-gamma-pyrone moiety, followed by pynD-catalyzed oxidation of the alcohol to the ketone and enolization to yield the characteristic tetramic acid-fused gamma-pyrone core of pyranonigrin H. Pyranonigrin H is substrate of pynH for dehydration-mediated exo-methylene formation from the serine side chain to produce pyranonigrin E, before the oxidase pynE reduces the exo-methylene of pyranonigrin E into a pendant methyl to form pyranonigrin G. The FAD-linked oxidoreductase pynB performs the reverse reaction and converts pyranonigrin G back to pyranonigrin E. The polypeptide is Hybrid PKS-NRPS synthetase pynA (Aspergillus niger (strain ATCC MYA-4892 / CBS 513.88 / FGSC A1513)).